The primary structure comprises 505 residues: Actin nucleation-promoting factor WASL (505 aa).

S2 carries the post-translational modification N-acetylserine. In terms of domain architecture, WH1 spans 34-141 (LGKKCVTMSS…KAVTDLLGRR (108 aa)). Disordered regions lie at residues 138–163 (LGRRQRKSEKRRDPPNGPNLPMATVD) and 184–205 (HTKEKKKGKAKKKRLTKADIGT). Basic residues predominate over residues 186 to 198 (KEKKKGKAKKKRL). Residues 203–216 (IGTPSNFQHIGHVG) form the CRIB domain. A Phosphoserine; by TNK2 modification is found at S242. A Phosphotyrosine; by FAK1 and TNK2 modification is found at Y256. A disordered region spans residues 266–406 (EAVKNELRRQ…HQVPTTAGNK (141 aa)). 2 stretches are compositionally biased toward pro residues: residues 276-364 (APPP…PPPS) and 371-391 (VAPPPPPPPPPPPGPPPPPGL). An Omega-N-methylarginine modification is found at R307. WH2 domains lie at 405–422 (NKAALLDQIREGAQLKKV) and 433–450 (GRDALLDQIRQGIQLKSV). The segment at 476-505 (QKRSKAIHSSDEDEDEDDEEDFEDDDEWED) is disordered. A phosphoserine mark is found at S484 and S485. Positions 486–505 (DEDEDEDDEEDFEDDDEWED) are enriched in acidic residues.

Binds actin and the Arp2/3 complex. Interacts with CDC42. Interacts with FCHSD1. Interacts with FCHSD2. Binds to SH3 domains of GRB2. Interacts with the C-terminal SH3 domain of DNMBP. Interacts with SNX9. Interacts with the WW domains of PRPF40A/FBP11. Interacts with PTK2/FAK1. Interacts with PACSIN1, PACSIN2 and PACSIN3. Interacts with NOSTRIN. Binds to TNK2. Interacts with SNX33. Interacts with NONO (via second RRM domain); the interaction is direct. Component of a multiprotein complex with NONO and SFPQ; associates with the complex via direct interaction with NONO. In terms of assembly, (Microbial infection) Interacts with E.coli effector protein EspF(U). Identified in a complex containing at least WASL, BAIAP2L1 and E.coli EspF(U). As to quaternary structure, (Microbial infection) Interacts with Shigella flexneri protein IcsA. The interaction with IcsA enhances the affinity of WASL for Arp2/3, thus assembling a tight complex which has maximal activity in actin assembly. Post-translationally, phosphorylation at Ser-242, Tyr-256, Ser-484 and Ser-485 enhances actin polymerization activity.

The protein localises to the cytoplasm. Its subcellular location is the cytoskeleton. The protein resides in the nucleus. In terms of biological role, regulates actin polymerization by stimulating the actin-nucleating activity of the Arp2/3 complex. Involved in various processes, such as mitosis and cytokinesis, via its role in the regulation of actin polymerization. Together with CDC42, involved in the extension and maintenance of the formation of thin, actin-rich surface projections called filopodia. In addition to its role in the cytoplasm, also plays a role in the nucleus by regulating gene transcription, probably by promoting nuclear actin polymerization. Binds to HSF1/HSTF1 and forms a complex on heat shock promoter elements (HSE) that negatively regulates HSP90 expression. Plays a role in dendrite spine morphogenesis. Decreasing levels of DNMBP (using antisense RNA) alters apical junction morphology in cultured enterocytes, junctions curve instead of being nearly linear. This Homo sapiens (Human) protein is Actin nucleation-promoting factor WASL (WASL).